Here is a 430-residue protein sequence, read N- to C-terminus: Long-chain specific acyl-CoA dehydrogenase, mitochondrial (430 aa).

The N-terminal 30 residues, 1 to 30 (MAARLLRGSLRFLGGHCAARPLPALRCSHS), are a transit peptide targeting the mitochondrion. Lys-42 carries the N6-acetyllysine modification. Phosphoserine is present on residues Ser-54 and Ser-55. An N6-acetyllysine; alternate mark is found at Lys-66 and Lys-81. N6-succinyllysine; alternate is present on residues Lys-66 and Lys-81. N6-acetyllysine is present on residues Lys-92 and Lys-95. The residue at position 165 (Lys-165) is an N6-succinyllysine. Residues 170–179 (IAMTELGAGS) and 203–205 (FIS) each bind FAD. Position 179 (Ser-179) interacts with substrate. 227 to 228 (AR) contributes to the substrate binding site. At Lys-240 the chain carries N6-succinyllysine. An N6-acetyllysine; alternate mark is found at Lys-254 and Lys-279. Residues Lys-254 and Lys-279 each carry the N6-succinyllysine; alternate modification. Substrate is bound by residues Tyr-282 and 289 to 292 (PQER). The active-site Proton acceptor is Glu-291. Arg-317 serves as a coordination point for FAD. Lys-318 is modified (N6-acetyllysine). Lys-322 carries the N6-acetyllysine; alternate modification. Lys-322 is subject to N6-succinyllysine; alternate. Residue Gln-328 coordinates FAD. Lys-358 is modified (N6-acetyllysine). Ser-362 is subject to Phosphoserine. 385 to 389 (QLHGG) contacts FAD. 412-413 (GG) contributes to the substrate binding site. FAD is bound at residue 414–416 (TNE).

It belongs to the acyl-CoA dehydrogenase family. Homotetramer. FAD serves as cofactor. Acetylation at Lys-318 and Lys-322 in proximity of the cofactor-binding sites strongly reduces catalytic activity. These sites are deacetylated by SIRT3.

The protein localises to the mitochondrion matrix. The enzyme catalyses a long-chain 2,3-saturated fatty acyl-CoA + oxidized [electron-transfer flavoprotein] + H(+) = a long-chain (2E)-enoyl-CoA + reduced [electron-transfer flavoprotein]. It catalyses the reaction hexanoyl-CoA + oxidized [electron-transfer flavoprotein] + H(+) = (2E)-hexenoyl-CoA + reduced [electron-transfer flavoprotein]. It carries out the reaction octanoyl-CoA + oxidized [electron-transfer flavoprotein] + H(+) = (2E)-octenoyl-CoA + reduced [electron-transfer flavoprotein]. The catalysed reaction is decanoyl-CoA + oxidized [electron-transfer flavoprotein] + H(+) = (2E)-decenoyl-CoA + reduced [electron-transfer flavoprotein]. The enzyme catalyses dodecanoyl-CoA + oxidized [electron-transfer flavoprotein] + H(+) = (2E)-dodecenoyl-CoA + reduced [electron-transfer flavoprotein]. It catalyses the reaction tetradecanoyl-CoA + oxidized [electron-transfer flavoprotein] + H(+) = (2E)-tetradecenoyl-CoA + reduced [electron-transfer flavoprotein]. It carries out the reaction oxidized [electron-transfer flavoprotein] + hexadecanoyl-CoA + H(+) = (2E)-hexadecenoyl-CoA + reduced [electron-transfer flavoprotein]. The catalysed reaction is octadecanoyl-CoA + oxidized [electron-transfer flavoprotein] + H(+) = (2E)-octadecenoyl-CoA + reduced [electron-transfer flavoprotein]. The enzyme catalyses eicosanoyl-CoA + oxidized [electron-transfer flavoprotein] + H(+) = (2E)-eicosenoyl-CoA + reduced [electron-transfer flavoprotein]. It catalyses the reaction docosanoyl-CoA + oxidized [electron-transfer flavoprotein] + H(+) = (2E)-docosenoyl-CoA + reduced [electron-transfer flavoprotein]. It carries out the reaction tetracosanoyl-CoA + oxidized [electron-transfer flavoprotein] + H(+) = (2E)-tetracosenoyl-CoA + reduced [electron-transfer flavoprotein]. The catalysed reaction is (5E)-tetradecenoyl-CoA + oxidized [electron-transfer flavoprotein] + H(+) = (2E,5E)-tetradecadienoyl-CoA + reduced [electron-transfer flavoprotein]. The enzyme catalyses (5Z)-tetradecenoyl-CoA + oxidized [electron-transfer flavoprotein] + H(+) = (2E,5Z)-tetradecadienoyl-CoA + reduced [electron-transfer flavoprotein]. It catalyses the reaction oxidized [electron-transfer flavoprotein] + (9Z)-octadecenoyl-CoA + H(+) = (2E,9Z)-octadecadienoyl-CoA + reduced [electron-transfer flavoprotein]. It participates in lipid metabolism; mitochondrial fatty acid beta-oxidation. Its function is as follows. Long-chain specific acyl-CoA dehydrogenase is one of the acyl-CoA dehydrogenases that catalyze the first step of mitochondrial fatty acid beta-oxidation, an aerobic process breaking down fatty acids into acetyl-CoA and allowing the production of energy from fats. The first step of fatty acid beta-oxidation consists in the removal of one hydrogen from C-2 and C-3 of the straight-chain fatty acyl-CoA thioester, resulting in the formation of trans-2-enoyl-CoA. Among the different mitochondrial acyl-CoA dehydrogenases, long-chain specific acyl-CoA dehydrogenase can act on saturated and unsaturated acyl-CoAs with 6 to 24 carbons with a preference for 8 to 18 carbons long primary chains. The chain is Long-chain specific acyl-CoA dehydrogenase, mitochondrial from Macaca fascicularis (Crab-eating macaque).